The primary structure comprises 158 residues: Transcription elongation factor GreA (158 aa).

The stretch at 47–74 (AEYHAAKEEQSHNEGRIAELEDKLARAD) forms a coiled coil.

It belongs to the GreA/GreB family.

In terms of biological role, necessary for efficient RNA polymerase transcription elongation past template-encoded arresting sites. The arresting sites in DNA have the property of trapping a certain fraction of elongating RNA polymerases that pass through, resulting in locked ternary complexes. Cleavage of the nascent transcript by cleavage factors such as GreA or GreB allows the resumption of elongation from the new 3'terminus. GreA releases sequences of 2 to 3 nucleotides. This is Transcription elongation factor GreA from Bradyrhizobium sp. (strain BTAi1 / ATCC BAA-1182).